The sequence spans 276 residues: Insulin-induced gene 1 protein (276 aa).

Disordered stretches follow at residues 1–26 (MPRL…PRAS) and 49–73 (AAHG…QGSS). The Cytoplasmic segment spans residues 1 to 83 (MPRLDDHLWR…SHVNSWHHHL (83 aa)). A compositionally biased stretch (basic residues) spans 16-25 (GTKHRSHPRA). The chain crosses the membrane as a helical span at residues 84–106 (VQRSLVLFSVGVVLALVLNLLQV). At 107 to 125 (QRNVTLFPDEVIATIFSSA) the chain is on the extracellular side. A helical transmembrane segment spans residues 126–143 (WWVPPCCGTAAAVVGLLY). At 144–158 (PCIDSHLGEPHKFKR) the chain is on the cytoplasmic side. Residues Lys-155 and Lys-157 each participate in a glycyl lysine isopeptide (Lys-Gly) (interchain with G-Cter in ubiquitin) cross-link. Residues 159-181 (EWASVMRCVAVFVGINHASAKLD) traverse the membrane as a helical segment. At 182-184 (FAN) the chain is on the extracellular side. Residues 185–203 (NVQLSLTLAALSLGLWWTF) traverse the membrane as a helical segment. The Cytoplasmic portion of the chain corresponds to 204–208 (DRSRS). The residue at position 206 (Ser-206) is a Phosphoserine. Residues 209-230 (GLGLGITIAFLATLITQLLVYN) traverse the membrane as a helical segment. Topologically, residues 231–244 (GVYQYTSPDFLYIR) are extracellular. A helical transmembrane segment spans residues 245 to 262 (SWLPCIFFSGGVTVGNIG). At 263 to 276 (RQLAMGVPEKPHSD) the chain is on the cytoplasmic side. The short motif at 270 to 276 (PEKPHSD) is the KxHxx element.

Belongs to the INSIG family. As to quaternary structure, interacts with SCAP; interaction is direct and only takes place in the presence of sterols; it prevents interaction between SCAP and the coat protein complex II (COPII). Associates with the SCAP-SREBP complex (composed of SCAP and SREBF1/SREBP1 or SREBF2/SREBP2); association is mediated via its interaction with SCAP and only takes place in the presence of sterols. Interaction with SCAP is mutually exclusive with PAQR3. Interacts with HMGCR (via its SSD); the interaction, accelerated by sterols, leads to the recruitment of HMGCR to AMFR/gp78 for its ubiquitination by the sterol-mediated ERAD pathway. Interacts with AMFR/gp78 (via its membrane domain); the interaction recruits HMCR at the ER membrane for its ubiquitination and degradation by the sterol-mediated ERAD pathway. Interacts with SOAT2/ACAT2; leading to promote recruitment of AMFR/gp78 and subsequent ubiquitination of SOAT2/ACAT2. Interacts with RNF139. Interacts with RNF145. Post-translationally, phosphorylation at Ser-206 by PCK1 reduces binding to oxysterol, disrupting the interaction between INSIG1 and SCAP, thereby promoting nuclear translocation of SREBP proteins (SREBF1/SREBP1 or SREBF2/SREBP2) and subsequent transcription of downstream lipogenesis-related genes. In terms of processing, ubiquitinated by AMFR/gp78 in response to sterol deprivation, leading to its degradation: when the SCAP-SREBP complex becomes dissociated from INSIG1, INSIG1 is then ubiquitinated and degraded in proteasomes. Although ubiquitination is required for rapid INSIG1 degradation, it is not required for release of the SCAP-SREBP complex. Ubiquitinated by RNF139.

The protein resides in the endoplasmic reticulum membrane. Functionally, oxysterol-binding protein that mediates feedback control of cholesterol synthesis by controlling both endoplasmic reticulum to Golgi transport of SCAP and degradation of HMGCR. Acts as a negative regulator of cholesterol biosynthesis by mediating the retention of the SCAP-SREBP complex in the endoplasmic reticulum, thereby blocking the processing of sterol regulatory element-binding proteins (SREBPs) SREBF1/SREBP1 and SREBF2/SREBP2. Binds oxysterol, including 25-hydroxycholesterol, regulating interaction with SCAP and retention of the SCAP-SREBP complex in the endoplasmic reticulum. In presence of oxysterol, interacts with SCAP, retaining the SCAP-SREBP complex in the endoplasmic reticulum, thereby preventing SCAP from escorting SREBF1/SREBP1 and SREBF2/SREBP2 to the Golgi. Sterol deprivation or phosphorylation by PCK1 reduce oxysterol-binding, disrupting the interaction between INSIG1 and SCAP, thereby promoting Golgi transport of the SCAP-SREBP complex, followed by processing and nuclear translocation of SREBF1/SREBP1 and SREBF2/SREBP2. Also regulates cholesterol synthesis by regulating degradation of HMGCR: initiates the sterol-mediated ubiquitin-mediated endoplasmic reticulum-associated degradation (ERAD) of HMGCR via recruitment of the reductase to the ubiquitin ligases AMFR/gp78 and/or RNF139. Also regulates degradation of SOAT2/ACAT2 when the lipid levels are low: initiates the ubiquitin-mediated degradation of SOAT2/ACAT2 via recruitment of the ubiquitin ligases AMFR/gp78. The chain is Insulin-induced gene 1 protein from Bos taurus (Bovine).